The sequence spans 344 residues: Inositol 2-dehydrogenase/D-chiro-inositol 3-dehydrogenase (344 aa).

The protein belongs to the Gfo/Idh/MocA family. Homotetramer.

It carries out the reaction myo-inositol + NAD(+) = scyllo-inosose + NADH + H(+). The enzyme catalyses 1D-chiro-inositol + NAD(+) = scyllo-inosine + NADH + H(+). Its pathway is polyol metabolism; myo-inositol degradation into acetyl-CoA; acetyl-CoA from myo-inositol: step 1/7. Its function is as follows. Involved in the oxidation of myo-inositol (MI) and D-chiro-inositol (DCI) to 2-keto-myo-inositol (2KMI or 2-inosose) and 1-keto-D-chiro-inositol (1KDCI), respectively. The polypeptide is Inositol 2-dehydrogenase/D-chiro-inositol 3-dehydrogenase (Bacillus velezensis (strain DSM 23117 / BGSC 10A6 / LMG 26770 / FZB42) (Bacillus amyloliquefaciens subsp. plantarum)).